Consider the following 510-residue polypeptide: Histidine ammonia-lyase (510 aa).

Positions 143-145 (ASG) form a cross-link, 5-imidazolinone (Ala-Gly). S144 bears the 2,3-didehydroalanine (Ser) mark.

Belongs to the PAL/histidase family. Post-translationally, contains an active site 4-methylidene-imidazol-5-one (MIO), which is formed autocatalytically by cyclization and dehydration of residues Ala-Ser-Gly.

It localises to the cytoplasm. It catalyses the reaction L-histidine = trans-urocanate + NH4(+). It functions in the pathway amino-acid degradation; L-histidine degradation into L-glutamate; N-formimidoyl-L-glutamate from L-histidine: step 1/3. This is Histidine ammonia-lyase from Aliivibrio fischeri (strain ATCC 700601 / ES114) (Vibrio fischeri).